A 990-amino-acid polypeptide reads, in one-letter code: Serine/threonine-protein kinase ATG1 (990 aa).

Residues 15–334 (FVIENEIGKG…FDDFFASPVI (320 aa)) form the Protein kinase domain. ATP contacts are provided by residues 21-29 (IGKGSFAVV) and Lys44. Asp165 functions as the Proton acceptor in the catalytic mechanism. The span at 375–408 (VSSIEASTQQPGVQPPVSTATSPPALESRSTQEA) shows a compositional bias: polar residues. Disordered stretches follow at residues 375 to 499 (VSSI…GGED), 529 to 566 (SRLG…TILS), 579 to 614 (ASTG…QGGQ), 750 to 784 (LSQE…SSSS), and 970 to 990 (SPVG…TESP). Low complexity-rich tracts occupy residues 529-554 (SRLG…SAPG) and 587-613 (PPGS…RQGG). A compositionally biased stretch (polar residues) spans 750–771 (LSQELDSSTATSGISPSRNSVQ). Residues 772–784 (GSARRVGSISSSS) are compositionally biased toward low complexity.

The protein belongs to the protein kinase superfamily. Ser/Thr protein kinase family. APG1/unc-51/ULK1 subfamily. In terms of assembly, homodimer. Forms a ternary complex with ATG13 and ATG17.

Its subcellular location is the cytoplasm. It is found in the preautophagosomal structure membrane. It catalyses the reaction L-seryl-[protein] + ATP = O-phospho-L-seryl-[protein] + ADP + H(+). The enzyme catalyses L-threonyl-[protein] + ATP = O-phospho-L-threonyl-[protein] + ADP + H(+). Functionally, serine/threonine protein kinase involved in the cytoplasm to vacuole transport (Cvt) and found to be essential in autophagy, where it is required for the formation of autophagosomes. Involved in the clearance of protein aggregates which cannot be efficiently cleared by the proteasome. Required for selective autophagic degradation of the nucleus (nucleophagy) as well as for mitophagy which contributes to regulate mitochondrial quantity and quality by eliminating the mitochondria to a basal level to fulfill cellular energy requirements and preventing excess ROS production. Also involved in endoplasmic reticulum-specific autophagic process, in selective removal of ER-associated degradation (ERAD) substrates. Plays a key role in ATG9 and ATG23 cycling through the pre-autophagosomal structure and is necessary to promote ATG18 binding to ATG9 through phosphorylation of ATG9. Catalyzes phosphorylation of ATG4, decreasing the interaction between ATG4 and ATG8 and impairing deconjugation of PE-conjugated forms of ATG8. Required for wild-type budding of haploid sporidia and for complete symptom development during pathogenic growth such as gall formation and teliospore production in ears of mature maize. This Mycosarcoma maydis (Corn smut fungus) protein is Serine/threonine-protein kinase ATG1.